The primary structure comprises 125 residues: Large ribosomal subunit protein bL21 (125 aa).

This sequence belongs to the bacterial ribosomal protein bL21 family. Part of the 50S ribosomal subunit. Contacts protein L20.

This protein binds to 23S rRNA in the presence of protein L20. The sequence is that of Large ribosomal subunit protein bL21 from Synechococcus sp. (strain CC9902).